The primary structure comprises 171 residues: Myelin basic protein (171 aa).

At Ala1 the chain carries N-acetylalanine. Residues 1-12 (ASQKRPSQRHGS) are compositionally biased toward basic residues. A disordered region spans residues 1–171 (ASQKRPSQRH…SRSGSPMARR (171 aa)). Phosphoserine occurs at positions 7 and 12. The residue at position 14 (Tyr14) is a Phosphotyrosine. Ser19 carries the post-translational modification Phosphoserine. At Thr20 the chain carries Phosphothreonine. 2 positions are modified to citrulline: Arg25 and Arg31. The residue at position 35 (Thr35) is a Phosphothreonine. Phosphoserine is present on Ser39. Arg42 and Arg48 each carry omega-N-methylarginine. Ser55 is subject to Phosphoserine. At Thr66 the chain carries Phosphothreonine. Residue Tyr68 is modified to Phosphotyrosine. Residues Thr95 and Thr98 each carry the phosphothreonine modification. Position 103 is a deamidated glutamine (Gln103). Arg107 is subject to Omega-N-methylarginine; alternate. Position 107 is a symmetric dimethylarginine; alternate (Arg107). A Phosphoserine modification is found at Ser115. Lys122 carries the N6-acetyllysine modification. Arg130 carries the citrulline modification. At Gln148 the chain carries Deamidated glutamine. A Citrulline modification is found at Arg160. A Phosphoserine modification is found at Ser162. Phosphoserine; by UHMK1 is present on Ser166. Arg171 carries the citrulline modification.

Belongs to the myelin basic protein family. Homodimer. In terms of processing, as in other animals, several charge isomers may be produced as a result of optional post-translational modifications, such as phosphorylation of serine or threonine residues, deamidation of glutamine or asparagine residues, citrullination and methylation of arginine residues. Phosphorylated by TAOK2, VRK2, MAPK11, MAPK12, MAPK14 and MINK1. Post-translationally, proteolytically cleaved in B cell lysosomes by cathepsin CTSG which degrades the major immunogenic MBP epitope and prevents the activation of MBP-specific autoreactive T cells.

It is found in the myelin membrane. Functionally, is, with PLP, the most abundant protein component of the myelin membrane in the CNS. Has a role in both the formation and stabilization of this compact multilayer arrangement of bilayers. Each splice variant and charge isomer may have a specialized function in the assembly of an optimized, biochemically functional myelin membrane. The polypeptide is Myelin basic protein (MBP) (Sus scrofa (Pig)).